The following is a 788-amino-acid chain: Protocadherin beta-18 (788 aa).

Residues 1–28 (MEPGKGRAQPTRQVLLFFVFLGGSLVYS) form the signal peptide. Cadherin domains follow at residues 29-133 (ETWS…TPTF), 134-242 (LNNH…APEF), 243-347 (EKPV…PPEI), 348-452 (AMTS…APAF), and 453-562 (TQTS…SPFV). At 29–691 (ETWSYSIAEE…AQADSLTVYL (663 aa)) the chain is on the extracellular side. The N-linked (GlcNAc...) asparagine glycan is linked to N169. Residues N419 and N437 are each glycosylated (N-linked (GlcNAc...) asparagine). N568 carries an N-linked (GlcNAc...) asparagine glycan. The Cadherin 6 domain occupies 569–672 (GSAPCTELVP…LVDGFSQPYL (104 aa)). Residues 692–712 (VVALASVSSLFLFSVFLFVAV) form a helical membrane-spanning segment. The Cytoplasmic segment spans residues 713-788 (RLCRRSRAAS…DSDMEKAPPF (76 aa)).

The protein resides in the cell membrane. In terms of biological role, potential calcium-dependent cell-adhesion protein. The chain is Protocadherin beta-18 (PCDHB18) from Pan troglodytes (Chimpanzee).